Consider the following 102-residue polypeptide: Large ribosomal subunit protein bL36m (102 aa).

It belongs to the bacterial ribosomal protein bL36 family. As to quaternary structure, component of the mitochondrial ribosome large subunit (39S) which comprises a 16S rRNA and about 50 distinct proteins.

It localises to the mitochondrion. The chain is Large ribosomal subunit protein bL36m (Mrpl36) from Mus musculus (Mouse).